Consider the following 337-residue polypeptide: Anthranilate phosphoribosyltransferase (337 aa).

5-phospho-alpha-D-ribose 1-diphosphate-binding positions include G80, 83–84 (GD), T88, 90–93 (NIST), 108–116 (KHGNRAVSS), and S120. G80 contributes to the anthranilate binding site. Residue S92 coordinates Mg(2+). N111 serves as a coordination point for anthranilate. An anthranilate-binding site is contributed by R166. Residues D224 and E225 each coordinate Mg(2+).

It belongs to the anthranilate phosphoribosyltransferase family. In terms of assembly, homodimer. Mg(2+) serves as cofactor.

It carries out the reaction N-(5-phospho-beta-D-ribosyl)anthranilate + diphosphate = 5-phospho-alpha-D-ribose 1-diphosphate + anthranilate. The protein operates within amino-acid biosynthesis; L-tryptophan biosynthesis; L-tryptophan from chorismate: step 2/5. Functionally, catalyzes the transfer of the phosphoribosyl group of 5-phosphorylribose-1-pyrophosphate (PRPP) to anthranilate to yield N-(5'-phosphoribosyl)-anthranilate (PRA). The sequence is that of Anthranilate phosphoribosyltransferase from Anaeromyxobacter sp. (strain K).